The sequence spans 264 residues: 3-methyl-2-oxobutanoate hydroxymethyltransferase (264 aa).

Residues D45 and D84 each coordinate Mg(2+). 3-methyl-2-oxobutanoate contacts are provided by residues 45–46, D84, and K112; that span reads DS. A Mg(2+)-binding site is contributed by E114. E181 serves as the catalytic Proton acceptor.

Belongs to the PanB family. Homodecamer; pentamer of dimers. Mg(2+) is required as a cofactor.

It is found in the cytoplasm. The enzyme catalyses 3-methyl-2-oxobutanoate + (6R)-5,10-methylene-5,6,7,8-tetrahydrofolate + H2O = 2-dehydropantoate + (6S)-5,6,7,8-tetrahydrofolate. It functions in the pathway cofactor biosynthesis; (R)-pantothenate biosynthesis; (R)-pantoate from 3-methyl-2-oxobutanoate: step 1/2. Its function is as follows. Catalyzes the reversible reaction in which hydroxymethyl group from 5,10-methylenetetrahydrofolate is transferred onto alpha-ketoisovalerate to form ketopantoate. This Psychromonas ingrahamii (strain DSM 17664 / CCUG 51855 / 37) protein is 3-methyl-2-oxobutanoate hydroxymethyltransferase.